A 140-amino-acid chain; its full sequence is Interleukin-4 (140 aa).

The first 20 residues, 1-20 (MGLNPQLVVILLFFLECTRS), serve as a signal peptide directing secretion. Disulfide bonds link Cys-25-Cys-107, Cys-47-Cys-87, and Cys-69-Cys-114. Asn-61, Asn-91, and Asn-117 each carry an N-linked (GlcNAc...) asparagine glycan.

The protein belongs to the IL-4/IL-13 family. In terms of assembly, interacts with IL4R. Interacts with IL13RA1.

The protein localises to the secreted. Cytokine secreted primarily by mast cells, T-cells, eosinophils, and basophils that plays a role in regulating antibody production, hematopoiesis and inflammation, and the development of effector T-cell responses. Induces the expression of class II MHC molecules on resting B-cells. Enhances both secretion and cell surface expression of IgE and IgG1. Also regulates the expression of the low affinity Fc receptor for IgE (CD23) on both lymphocytes and monocytes. Positively regulates IL31RA expression in macrophages. Stimulates autophagy in dendritic cells by interfering with mTORC1 signaling and through the induction of RUFY4. In addition, plays a critical role in higher functions of the normal brain, such as memory and learning. Upon binding to IL4, IL4R receptor dimerizes either with the common IL2R gamma chain/IL2RG to produce the type 1 signaling complex, located mainly on hematopoietic cells, or with the IL13RA1 to produce the type 2 complex, which is also expressed on nonhematopoietic cells. Engagement of both types of receptors initiates JAK3 and to a lower extend JAK1 phosphorylation leading to activation of the signal transducer and activator of transcription 6/STAT6. The chain is Interleukin-4 (Il4) from Mus musculus (Mouse).